The chain runs to 122 residues: Large ribosomal subunit protein uL18 (122 aa).

Positions 1 to 20 (MLKKVSKNTNRQGRHQRVRN) are enriched in basic residues. Residues 1–22 (MLKKVSKNTNRQGRHQRVRNKI) form a disordered region.

The protein belongs to the universal ribosomal protein uL18 family. In terms of assembly, part of the 50S ribosomal subunit; part of the 5S rRNA/L5/L18/L25 subcomplex. Contacts the 5S and 23S rRNAs.

Functionally, this is one of the proteins that bind and probably mediate the attachment of the 5S RNA into the large ribosomal subunit, where it forms part of the central protuberance. This chain is Large ribosomal subunit protein uL18, found in Alkaliphilus metalliredigens (strain QYMF).